A 938-amino-acid polypeptide reads, in one-letter code: Probable glutamyl endopeptidase, chloroplastic (938 aa).

Residues 1-54 (MSSLTILLQRACLRFALLPVPPLRAPLRPPRRPLGLPRRSAMSSSAASRLSHIV) constitute a chloroplast transit peptide. Residues 58-76 (GGAAGESSEPPAAAAAASG) are compositionally biased toward low complexity. Residues 58 to 77 (GGAAGESSEPPAAAAAASGL) are disordered. Residues Ser762, Asp836, and His870 each act as charge relay system in the active site. Polar residues predominate over residues 897–913 (SSKTDSDSVADTENKTV). Residues 897–938 (SSKTDSDSVADTENKTVSASGGGAPCEGPEAEGFSSMQRSLL) are disordered.

Belongs to the peptidase S9D family.

The protein resides in the plastid. Its subcellular location is the chloroplast stroma. Its function is as follows. Serine-type protease active in vitro against the LHCII N-terminal. Cleaves its substrate on the carboxy-side of Glu residues. This chain is Probable glutamyl endopeptidase, chloroplastic (GEP), found in Oryza sativa subsp. japonica (Rice).